A 358-amino-acid polypeptide reads, in one-letter code: Ion-translocating oxidoreductase complex subunit D (358 aa).

The next 3 membrane-spanning stretches (helical) occupy residues 24–44 (ILAM…GVVL), 79–99 (LTAL…IIII), and 125–145 (IGYV…MPPI). At Thr186 the chain carries FMN phosphoryl threonine. 5 consecutive transmembrane segments (helical) span residues 220–240 (FAQG…FLIL), 248–268 (IPVA…FTGF), 271–291 (LSAI…FIAT), 297–317 (SITP…VYLI), and 321–341 (GNYP…VPLI).

This sequence belongs to the NqrB/RnfD family. The complex is composed of six subunits: RnfA, RnfB, RnfC, RnfD, RnfE and RnfG. The cofactor is FMN.

Its subcellular location is the cell inner membrane. Part of a membrane-bound complex that couples electron transfer with translocation of ions across the membrane. In Haemophilus influenzae (strain ATCC 51907 / DSM 11121 / KW20 / Rd), this protein is Ion-translocating oxidoreductase complex subunit D.